Reading from the N-terminus, the 428-residue chain is C4-dicarboxylate transport protein (428 aa).

8 helical membrane-spanning segments follow: residues 8–28 (SLYF…HFYP), 44–64 (LIKM…IAGM), 76–96 (VALL…LIIV), 142–162 (IGAF…LFGF), 184–206 (VIFG…AMAF), 222–242 (LIIC…GSIA), 326–346 (IVHQ…AAGV), and 352–372 (IVLA…LALI).

It belongs to the dicarboxylate/amino acid:cation symporter (DAACS) (TC 2.A.23) family.

The protein localises to the cell inner membrane. Responsible for the transport of dicarboxylates such as succinate, fumarate, and malate from the periplasm across the membrane. The sequence is that of C4-dicarboxylate transport protein from Shigella flexneri.